The primary structure comprises 687 residues: UvrABC system protein C (687 aa).

The GIY-YIG domain occupies 16–95 (TEPGVYKFRD…IKKFDPHFNV (80 aa)). The UVR domain occupies 208–243 (DSVVRRLTNEMISASEALDFEKAARKRDDLNAVRKI).

It belongs to the UvrC family. As to quaternary structure, interacts with UvrB in an incision complex.

The protein localises to the cytoplasm. In terms of biological role, the UvrABC repair system catalyzes the recognition and processing of DNA lesions. UvrC both incises the 5' and 3' sides of the lesion. The N-terminal half is responsible for the 3' incision and the C-terminal half is responsible for the 5' incision. This is UvrABC system protein C from Corynebacterium diphtheriae (strain ATCC 700971 / NCTC 13129 / Biotype gravis).